We begin with the raw amino-acid sequence, 372 residues long: L-selectin (372 aa).

The N-terminal stretch at 1 to 28 (MVFPWRCEGTYWGSRNILKLWVWTLLCC) is a signal peptide. Residues 29–38 (DFLIHHGTHC) constitute a propeptide that is removed on maturation. Residues 39–332 (WTYHYSEKPM…FSKIKEGDYN (294 aa)) are Extracellular-facing. The C-type lectin domain occupies 55-155 (KFCKQNYTDL…ACHKRKAALC (101 aa)). Disulfide bonds link Cys-57-Cys-155, Cys-128-Cys-147, Cys-128-Cys-160, Cys-160-Cys-171, Cys-165-Cys-180, Cys-182-Cys-191, Cys-197-Cys-241, Cys-227-Cys-254, Cys-259-Cys-303, and Cys-289-Cys-316. N-linked (GlcNAc...) asparagine glycans are attached at residues Asn-60 and Asn-104. Glu-118, Asn-120, Glu-126, Asn-143, and Asp-144 together coordinate Ca(2+). Residues 156–192 (YTASCQPGSCNGRGECVETINNHTCICDAGYYGPQCQ) form the EGF-like domain. An N-linked (GlcNAc...) asparagine glycan is attached at Asn-177. Sushi domains lie at 195-256 (VQCE…ICQV) and 257-318 (VQCE…ICQE). N-linked (GlcNAc...) asparagine glycans are attached at residues Asn-216, Asn-226, Asn-246, Asn-278, Asn-288, Asn-308, and Asn-320. A helical membrane pass occupies residues 333–355 (PLFIPVAVMVTAFSGLAFLIWLA). Residues 356 to 372 (RRLKKGKKSQERMDDPY) lie on the Cytoplasmic side of the membrane.

It belongs to the selectin/LECAM family. In terms of assembly, interaction with SELPLG/PSGL1 and PODXL2 is required for promoting recruitment and rolling of leukocytes. This interaction is dependent on the sialyl Lewis X glycan modification of SELPLG and PODXL2, and tyrosine sulfation modifications of SELPLG. Sulfation on 'Tyr-51' of SELPLG is important for L-selectin binding. In terms of processing, N-glycosylated. As to expression, predominantly expressed in lymphoid tissue.

The protein resides in the cell membrane. Its function is as follows. Calcium-dependent lectin that mediates cell adhesion by binding to glycoproteins on neighboring cells. Mediates the adherence of lymphocytes to endothelial cells of high endothelial venules in peripheral lymph nodes. Promotes initial tethering and rolling of leukocytes in endothelia. This Mus musculus (Mouse) protein is L-selectin (Sell).